A 430-amino-acid chain; its full sequence is Tol-Pal system protein TolB (430 aa).

The first 21 residues, 1 to 21, serve as a signal peptide directing secretion; sequence MKQAFRVALGFFLLWASVLHA.

This sequence belongs to the TolB family. As to quaternary structure, the Tol-Pal system is composed of five core proteins: the inner membrane proteins TolA, TolQ and TolR, the periplasmic protein TolB and the outer membrane protein Pal. They form a network linking the inner and outer membranes and the peptidoglycan layer.

The protein localises to the periplasm. Part of the Tol-Pal system, which plays a role in outer membrane invagination during cell division and is important for maintaining outer membrane integrity. TolB occupies a key intermediary position in the Tol-Pal system because it communicates directly with both membrane-embedded components, Pal in the outer membrane and TolA in the inner membrane. This chain is Tol-Pal system protein TolB, found in Sodalis glossinidius (strain morsitans).